The chain runs to 85 residues: Large ribosomal subunit protein bL27 (85 aa).

The tract at residues 1–25 is disordered; the sequence is MAHKKGVGSSRNGRDSNPKMLGVKR.

This sequence belongs to the bacterial ribosomal protein bL27 family.

The sequence is that of Large ribosomal subunit protein bL27 from Roseiflexus castenholzii (strain DSM 13941 / HLO8).